A 545-amino-acid chain; its full sequence is Chaperonin GroEL (545 aa).

Residues 31–34 (TLGP), 88–92 (DGTTT), Gly415, 478–480 (NAA), and Asp494 each bind ATP.

Belongs to the chaperonin (HSP60) family. In terms of assembly, forms a cylinder of 14 subunits composed of two heptameric rings stacked back-to-back. Interacts with the co-chaperonin GroES.

It is found in the cytoplasm. It carries out the reaction ATP + H2O + a folded polypeptide = ADP + phosphate + an unfolded polypeptide.. In terms of biological role, together with its co-chaperonin GroES, plays an essential role in assisting protein folding. The GroEL-GroES system forms a nano-cage that allows encapsulation of the non-native substrate proteins and provides a physical environment optimized to promote and accelerate protein folding. In Streptococcus pyogenes serotype M4 (strain MGAS10750), this protein is Chaperonin GroEL.